The primary structure comprises 86 residues: Large ribosomal subunit protein uL23 (86 aa).

It belongs to the universal ribosomal protein uL23 family. In terms of assembly, part of the 50S ribosomal subunit. Contacts protein L29.

Binds to 23S rRNA. One of the proteins that surrounds the polypeptide exit tunnel on the outside of the ribosome. In Pyrococcus abyssi (strain GE5 / Orsay), this protein is Large ribosomal subunit protein uL23.